Consider the following 115-residue polypeptide: Phosphoribosyl-AMP cyclohydrolase (115 aa).

Asp-80 provides a ligand contact to Mg(2+). A Zn(2+)-binding site is contributed by Cys-81. Mg(2+)-binding residues include Asp-82 and Asp-84. Residues Cys-97 and Cys-104 each coordinate Zn(2+).

Belongs to the PRA-CH family. As to quaternary structure, homodimer. The cofactor is Mg(2+). Zn(2+) is required as a cofactor.

It localises to the cytoplasm. It carries out the reaction 1-(5-phospho-beta-D-ribosyl)-5'-AMP + H2O = 1-(5-phospho-beta-D-ribosyl)-5-[(5-phospho-beta-D-ribosylamino)methylideneamino]imidazole-4-carboxamide. The protein operates within amino-acid biosynthesis; L-histidine biosynthesis; L-histidine from 5-phospho-alpha-D-ribose 1-diphosphate: step 3/9. Its function is as follows. Catalyzes the hydrolysis of the adenine ring of phosphoribosyl-AMP. The chain is Phosphoribosyl-AMP cyclohydrolase from Mycolicibacterium gilvum (strain PYR-GCK) (Mycobacterium gilvum (strain PYR-GCK)).